A 327-amino-acid chain; its full sequence is DNA-directed RNA polymerase subunit alpha (327 aa).

Residues Met1–Glu233 are alpha N-terminal domain (alpha-NTD). The interval Leu267–Lys327 is alpha C-terminal domain (alpha-CTD).

It belongs to the RNA polymerase alpha chain family. In plastids the minimal PEP RNA polymerase catalytic core is composed of four subunits: alpha, beta, beta', and beta''. When a (nuclear-encoded) sigma factor is associated with the core the holoenzyme is formed, which can initiate transcription.

It is found in the plastid. The protein localises to the chloroplast. The enzyme catalyses RNA(n) + a ribonucleoside 5'-triphosphate = RNA(n+1) + diphosphate. Its function is as follows. DNA-dependent RNA polymerase catalyzes the transcription of DNA into RNA using the four ribonucleoside triphosphates as substrates. The protein is DNA-directed RNA polymerase subunit alpha of Nasturtium officinale (Watercress).